We begin with the raw amino-acid sequence, 434 residues long: Peptidase B (434 aa).

The Mn(2+) site is built by K198 and D203. Residue K210 is part of the active site. Mn(2+)-binding residues include D221, D280, and E282. The active site involves R284.

The protein belongs to the peptidase M17 family. In terms of assembly, homohexamer. Mn(2+) is required as a cofactor.

The protein resides in the cytoplasm. The enzyme catalyses Release of an N-terminal amino acid, Xaa, from a peptide or arylamide. Xaa is preferably Glu or Asp but may be other amino acids, including Leu, Met, His, Cys and Gln.. Its function is as follows. Probably plays an important role in intracellular peptide degradation. The chain is Peptidase B from Pasteurella multocida (strain Pm70).